Here is a 1246-residue protein sequence, read N- to C-terminus: HMG2-induced ER-remodeling protein 1 (1246 aa).

Disordered regions lie at residues 19–241 (KGKR…GSLT), 263–288 (HHIQ…LPPI), and 816–836 (MPDA…KDEK). Residues 27-41 (KSAASTRTSEATTTS) show a composition bias toward low complexity. Polar residues predominate over residues 58–95 (TIASPQRPLSGQNVNNELSNSKPAVSAEKVSQQGQVPT). At S102 the chain carries Phosphoserine. T128 carries the phosphothreonine modification. Low complexity-rich tracts occupy residues 154-163 (RSSSISTSLN) and 211-230 (SKIS…PSSS). The segment covering 271 to 282 (SGREQDSPHSES) has biased composition (basic and acidic residues). The residue at position 277 (S277) is a Phosphoserine. S1013 carries the post-translational modification Phosphoserine. 2 stretches are compositionally biased toward polar residues: residues 1109 to 1133 (SSRH…TPDS) and 1200 to 1215 (SRSP…QQKA). Disordered stretches follow at residues 1109–1157 (SSRH…LPKI) and 1192–1224 (SLYG…LVED). T1130 is modified (phosphothreonine). A phosphoserine mark is found at S1200, S1204, and S1207.

Belongs to the GIP3/HER1 family. As to quaternary structure, may interact with ribosomes.

The protein localises to the cytoplasm. Required for HMG2-induced endoplasmic reticulum-remodeling. This is HMG2-induced ER-remodeling protein 1 (HER1) from Saccharomyces cerevisiae (strain ATCC 204508 / S288c) (Baker's yeast).